The following is a 468-amino-acid chain: ATP synthase subunit beta (468 aa).

150–157 lines the ATP pocket; it reads GGAGVGKT.

It belongs to the ATPase alpha/beta chains family. In terms of assembly, F-type ATPases have 2 components, CF(1) - the catalytic core - and CF(0) - the membrane proton channel. CF(1) has five subunits: alpha(3), beta(3), gamma(1), delta(1), epsilon(1). CF(0) has three main subunits: a(1), b(2) and c(9-12). The alpha and beta chains form an alternating ring which encloses part of the gamma chain. CF(1) is attached to CF(0) by a central stalk formed by the gamma and epsilon chains, while a peripheral stalk is formed by the delta and b chains.

The protein resides in the cell inner membrane. It carries out the reaction ATP + H2O + 4 H(+)(in) = ADP + phosphate + 5 H(+)(out). Produces ATP from ADP in the presence of a proton gradient across the membrane. The catalytic sites are hosted primarily by the beta subunits. This Acidovorax ebreus (strain TPSY) (Diaphorobacter sp. (strain TPSY)) protein is ATP synthase subunit beta.